Reading from the N-terminus, the 222-residue chain is Interleukin-12 subunit alpha (222 aa).

The N-terminal stretch at 1–25 is a signal peptide; that stretch reads MCPLRSLFLMATLVFLNHLDHLSLA. 3 cysteine pairs are disulfide-bonded: Cys-40–Cys-113, Cys-67–Cys-199, and Cys-88–Cys-126. N-linked (GlcNAc...) asparagine glycosylation is found at Asn-96 and Asn-174.

It belongs to the IL-6 superfamily. In terms of assembly, heterodimer with IL12B; disulfide-linked. This heterodimer is known as interleukin IL-12. Heterodimer with EBI3/IL27B; not disulfide-linked. This heterodimer is known as interleukin IL-35. Interacts with NBR1; this interaction promotes IL-12 secretion.

The protein resides in the secreted. Heterodimerizes with IL12B to form the IL-12 cytokine or with EBI3/IL27B to form the IL-35 cytokine. IL-12 is primarily produced by professional antigen-presenting cells (APCs) such as B-cells and dendritic cells (DCs) as well as macrophages and granulocytes and regulates T-cell and natural killer-cell responses, induces the production of interferon-gamma (IFN-gamma), favors the differentiation of T-helper 1 (Th1) cells and is an important link between innate resistance and adaptive immunity. Mechanistically, exerts its biological effects through a receptor composed of IL12R1 and IL12R2 subunits. Binding to the receptor results in the rapid tyrosine phosphorylation of a number of cellular substrates including the JAK family kinases TYK2 and JAK2. In turn, recruited STAT4 gets phosphorylated and translocates to the nucleus where it regulates cytokine/growth factor responsive genes. As part of IL-35, plays essential roles in maintaining the immune homeostasis of the liver microenvironment and also functions as an immune-suppressive cytokine. Mediates biological events through unconventional receptors composed of IL12RB2 and gp130/IL6ST heterodimers or homodimers. Signaling requires the transcription factors STAT1 and STAT4, which form a unique heterodimer that binds to distinct DNA sites. The sequence is that of Interleukin-12 subunit alpha (IL12A) from Lama glama (Llama).